The primary structure comprises 208 residues: Probable nicotinate-nucleotide adenylyltransferase (208 aa).

Belongs to the NadD family.

The catalysed reaction is nicotinate beta-D-ribonucleotide + ATP + H(+) = deamido-NAD(+) + diphosphate. It participates in cofactor biosynthesis; NAD(+) biosynthesis; deamido-NAD(+) from nicotinate D-ribonucleotide: step 1/1. Catalyzes the reversible adenylation of nicotinate mononucleotide (NaMN) to nicotinic acid adenine dinucleotide (NaAD). The protein is Probable nicotinate-nucleotide adenylyltransferase of Nostoc sp. (strain PCC 7120 / SAG 25.82 / UTEX 2576).